Reading from the N-terminus, the 323-residue chain is Alpha-tubulin N-acetyltransferase 1 (323 aa).

The region spanning 1-190 (MEFPFDVDAL…NNFVIFEGFF (190 aa)) is the N-acetyltransferase domain. Lys56 carries the N6-acetyllysine; by autocatalysis modification. Residue 124–137 (FYIHESVQRHGHGR) coordinates acetyl-CoA. An N6-acetyllysine; by autocatalysis modification is found at Lys146. An acetyl-CoA-binding site is contributed by 160–169 (SQKLLKFLNK). Positions 196-239 (PPAPSLRATRHSRAAAVDPTPTAPARKLPPKRAEGDIKPYSSSD) are disordered. Over residues 209 to 220 (AAAVDPTPTAPA) the composition is skewed to low complexity. A compositionally biased stretch (basic and acidic residues) spans 226–239 (KRAEGDIKPYSSSD). Residues Lys233 and Lys244 each carry the N6-acetyllysine; by autocatalysis modification. A disordered region spans residues 252 to 287 (PLNRAPRRATPPAHPPPRSSSLGNSPERGPLRPFVP). Residues Ser272 and Ser276 each carry the phosphoserine modification. Arg305 bears the Asymmetric dimethylarginine mark. A Phosphoserine modification is found at Ser315. Arg323 is modified (omega-N-methylarginine).

Belongs to the acetyltransferase ATAT1 family. In terms of assembly, component of the BBSome complex. Interacts with AP2 alpha-adaptins, including AP2A2, but not with AP1 gamma-adaptin (AP1G1/AP1G2); this interaction is required for efficient alpha-tubulin acetylation, hence clathrin-coated pits are sites of microtubule acetylation. Post-translationally, autoacetylation strongly increases tubulin acetylation.

It is found in the cytoplasm. The protein localises to the membrane. Its subcellular location is the clathrin-coated pit. The protein resides in the cell junction. It localises to the focal adhesion. It is found in the cell projection. The protein localises to the axon. Its subcellular location is the cytoskeleton. The protein resides in the spindle. The enzyme catalyses L-lysyl-[alpha-tubulin] + acetyl-CoA = N(6)-acetyl-L-lysyl-[alpha-tubulin] + CoA + H(+). Its function is as follows. Specifically acetylates 'Lys-40' in alpha-tubulin on the lumenal side of microtubules. Promotes microtubule destabilization and accelerates microtubule dynamics; this activity may be independent of acetylation activity. Acetylates alpha-tubulin with a slow enzymatic rate, due to a catalytic site that is not optimized for acetyl transfer. Enters the microtubule through each end and diffuses quickly throughout the lumen of microtubules. Acetylates only long/old microtubules because of its slow acetylation rate since it does not have time to act on dynamically unstable microtubules before the enzyme is released. Required for normal sperm flagellar function. Promotes directional cell locomotion and chemotaxis, through AP2A2-dependent acetylation of alpha-tubulin at clathrin-coated pits that are concentrated at the leading edge of migrating cells. May facilitate primary cilium assembly. In Macaca mulatta (Rhesus macaque), this protein is Alpha-tubulin N-acetyltransferase 1.